The following is a 454-amino-acid chain: UDP-N-acetylmuramate--L-alanine ligase (454 aa).

112 to 118 provides a ligand contact to ATP; sequence GTHGKTT.

It belongs to the MurCDEF family.

Its subcellular location is the cytoplasm. The catalysed reaction is UDP-N-acetyl-alpha-D-muramate + L-alanine + ATP = UDP-N-acetyl-alpha-D-muramoyl-L-alanine + ADP + phosphate + H(+). It functions in the pathway cell wall biogenesis; peptidoglycan biosynthesis. Functionally, cell wall formation. This chain is UDP-N-acetylmuramate--L-alanine ligase, found in Oleidesulfovibrio alaskensis (strain ATCC BAA-1058 / DSM 17464 / G20) (Desulfovibrio alaskensis).